The following is a 149-amino-acid chain: Ribosome maturation factor RimP (149 aa).

The protein belongs to the RimP family.

Its subcellular location is the cytoplasm. Functionally, required for maturation of 30S ribosomal subunits. The chain is Ribosome maturation factor RimP from Neisseria gonorrhoeae (strain NCCP11945).